A 108-amino-acid polypeptide reads, in one-letter code: MMKGQLAGLMRQAQQMQENMKKAQDALADILVEGAAGGGLVKVTMSCRNDVKRIAIDPSLLADDKDMLEDLVAAAFNDALRKAEATSQEKMSALTAGLPLPPGMKLPF.

It belongs to the YbaB/EbfC family. In terms of assembly, homodimer.

The protein localises to the cytoplasm. It localises to the nucleoid. Functionally, binds to DNA and alters its conformation. May be involved in regulation of gene expression, nucleoid organization and DNA protection. This is Nucleoid-associated protein BAV0915 from Bordetella avium (strain 197N).